Consider the following 130-residue polypeptide: Small ribosomal subunit protein uS9 (130 aa).

This sequence belongs to the universal ribosomal protein uS9 family.

This is Small ribosomal subunit protein uS9 from Verminephrobacter eiseniae (strain EF01-2).